The chain runs to 527 residues: F-box protein SKIP2 (527 aa).

The 47-residue stretch at 39–85 (DRDFTGDLPDECLAHVFQFLGAGDRKRCSLVCKRWLLVDGQSRHRLS) folds into the F-box domain.

Part of a SCF (ASK-cullin-F-box) protein ligase complex. Interacts with SKP1A/ASK1, SKP1B/ASK2 and ASK11.

Its subcellular location is the nucleus. It functions in the pathway protein modification; protein ubiquitination. Component of SCF(ASK-cullin-F-box) E3 ubiquitin ligase complexes, which may mediate the ubiquitination and subsequent proteasomal degradation of target proteins. The polypeptide is F-box protein SKIP2 (SKIP2) (Arabidopsis thaliana (Mouse-ear cress)).